We begin with the raw amino-acid sequence, 147 residues long: Large ribosomal subunit protein uL16 (147 aa).

The protein belongs to the universal ribosomal protein uL16 family. As to quaternary structure, part of the 50S ribosomal subunit.

Its function is as follows. Binds 23S rRNA and is also seen to make contacts with the A and possibly P site tRNAs. The chain is Large ribosomal subunit protein uL16 from Clostridium novyi (strain NT).